A 123-amino-acid polypeptide reads, in one-letter code: Small ribosomal subunit protein uS12 (123 aa).

Position 89 is a 3-methylthioaspartic acid (aspartate 89). Residues 100–123 (GSLDTSGVKDRKQGRSKYGTKRPK) form a disordered region. The span at 113-123 (GRSKYGTKRPK) shows a compositional bias: basic residues.

This sequence belongs to the universal ribosomal protein uS12 family. As to quaternary structure, part of the 30S ribosomal subunit. Contacts proteins S8 and S17. May interact with IF1 in the 30S initiation complex.

In terms of biological role, with S4 and S5 plays an important role in translational accuracy. Functionally, interacts with and stabilizes bases of the 16S rRNA that are involved in tRNA selection in the A site and with the mRNA backbone. Located at the interface of the 30S and 50S subunits, it traverses the body of the 30S subunit contacting proteins on the other side and probably holding the rRNA structure together. The combined cluster of proteins S8, S12 and S17 appears to hold together the shoulder and platform of the 30S subunit. The sequence is that of Small ribosomal subunit protein uS12 from Ectopseudomonas mendocina (strain ymp) (Pseudomonas mendocina).